We begin with the raw amino-acid sequence, 424 residues long: Isovaleryl-CoA dehydrogenase, mitochondrial (424 aa).

Residues 1 to 30 constitute a mitochondrion transit peptide; it reads MATAVRLLGRRVSSWRLRPLPSPLAVPQRA. Residues Lys56, Lys65, and Lys76 each carry the N6-acetyllysine; alternate modification. 3 positions are modified to N6-succinyllysine; alternate: Lys56, Lys65, and Lys76. FAD contacts are provided by residues 163 to 172 and 196 to 198; these read LAMSEPNAGS and WIT. Residue Ser172 participates in substrate binding. 220–221 is a binding site for substrate; it reads SR. Lys239 is modified (N6-acetyllysine). The residue at position 260 (Lys260) is an N6-acetyllysine; alternate. Position 260 is an N6-succinyllysine; alternate (Lys260). Residues Tyr275 and 282–285 contribute to the substrate site; that span reads DLER. Glu284 functions as the Proton acceptor in the catalytic mechanism. Arg310 provides a ligand contact to FAD. Lys316 carries the N6-succinyllysine modification. FAD is bound by residues Gln321 and 378–382; that span reads QCLGG. Position 405–406 (405–406) interacts with substrate; the sequence is GG. An FAD-binding site is contributed by 407–409; it reads TSE.

This sequence belongs to the acyl-CoA dehydrogenase family. In terms of assembly, homotetramer. It depends on FAD as a cofactor.

The protein resides in the mitochondrion matrix. It catalyses the reaction 3-methylbutanoyl-CoA + oxidized [electron-transfer flavoprotein] + H(+) = 3-methylbut-2-enoyl-CoA + reduced [electron-transfer flavoprotein]. The catalysed reaction is pentanoyl-CoA + oxidized [electron-transfer flavoprotein] + H(+) = (2E)-pentenoyl-CoA + reduced [electron-transfer flavoprotein]. It carries out the reaction hexanoyl-CoA + oxidized [electron-transfer flavoprotein] + H(+) = (2E)-hexenoyl-CoA + reduced [electron-transfer flavoprotein]. The enzyme catalyses butanoyl-CoA + oxidized [electron-transfer flavoprotein] + H(+) = (2E)-butenoyl-CoA + reduced [electron-transfer flavoprotein]. Its pathway is amino-acid degradation; L-leucine degradation; (S)-3-hydroxy-3-methylglutaryl-CoA from 3-isovaleryl-CoA: step 1/3. In terms of biological role, catalyzes the conversion of isovaleryl-CoA/3-methylbutanoyl-CoA to 3-methylbut-2-enoyl-CoA as an intermediate step in the leucine (Leu) catabolic pathway. To a lesser extent, is also able to catalyze the oxidation of other saturated short-chain acyl-CoA thioesters as pentanoyl-CoA, hexenoyl-CoA and butenoyl-CoA. The polypeptide is Isovaleryl-CoA dehydrogenase, mitochondrial (Ivd) (Rattus norvegicus (Rat)).